The primary structure comprises 108 residues: Peptidyl-prolyl cis-trans isomerase FKBP1B (108 aa).

The 89-residue stretch at 20–108 (GQICVVHYTG…IFDVELLSLE (89 aa)) folds into the PPIase FKBP-type domain.

The protein belongs to the FKBP-type PPIase family. FKBP1 subfamily. As to quaternary structure, identified in a complex composed of RYR2, FKBP1B, PKA catalytic subunit, PRKAR2A, AKAP6, and the protein phosphatases PP2A and PP1. Interacts directly with RYR2.

Its subcellular location is the cytoplasm. The protein localises to the sarcoplasmic reticulum. The enzyme catalyses [protein]-peptidylproline (omega=180) = [protein]-peptidylproline (omega=0). Its activity is regulated as follows. Inhibited by both FK506 and rapamycin. Functionally, has the potential to contribute to the immunosuppressive and toxic effects of FK506 and rapamycin. PPIases accelerate the folding of proteins. It catalyzes the cis-trans isomerization of proline imidic peptide bonds in oligopeptides. The sequence is that of Peptidyl-prolyl cis-trans isomerase FKBP1B (Fkbp1b) from Mus musculus (Mouse).